Consider the following 87-residue polypeptide: MKKKPRRTRRPIAAPATPAKKNLLDSLGVSEVDYKDISRLRTFISDRGKIRSRRVTGLTVQQQRQIATAIKNAREMALLPYPASRPQ.

It belongs to the bacterial ribosomal protein bS18 family. As to quaternary structure, part of the 30S ribosomal subunit. Forms a tight heterodimer with protein bS6.

Its function is as follows. Binds as a heterodimer with protein bS6 to the central domain of the 16S rRNA, where it helps stabilize the platform of the 30S subunit. The chain is Small ribosomal subunit protein bS18B from Mycobacterium marinum (strain ATCC BAA-535 / M).